The primary structure comprises 153 residues: Putative type II secretion system protein M (153 aa).

Topologically, residues M1 to I16 are cytoplasmic. A helical membrane pass occupies residues V17 to I37. The Periplasmic segment spans residues D38–Q153.

Belongs to the GSP M family. As to quaternary structure, type II secretion system is composed of four main components: the outer membrane complex, the inner membrane complex, the cytoplasmic secretion ATPase and the periplasm-spanning pseudopilus. Forms homodimers. Interacts with GspL. Interacts with GspE and GspF.

Its subcellular location is the cell inner membrane. Its function is as follows. Inner membrane component of the type II secretion system required for the energy-dependent secretion of extracellular factors such as proteases and toxins from the periplasm. Plays a role in the complex assembly and recruits GspL resulting in a stable complex in the inner membrane. Provides thus a link between the energy-providing GspE protein in the cytoplasm and the rest of the T2SS machinery. This chain is Putative type II secretion system protein M (gspM), found in Escherichia coli (strain K12).